The chain runs to 225 residues: UPF0758 protein XCV4028 (225 aa).

One can recognise an MPN domain in the interval 102 to 224; that stretch reads ALSDPPSVGR…PVSFAERGWL (123 aa). Zn(2+) is bound by residues H173, H175, and D186. Positions 173 to 186 match the JAMM motif motif; sequence HNHPSGNPEPSEAD.

The protein belongs to the UPF0758 family.

This Xanthomonas euvesicatoria pv. vesicatoria (strain 85-10) (Xanthomonas campestris pv. vesicatoria) protein is UPF0758 protein XCV4028.